A 341-amino-acid polypeptide reads, in one-letter code: GTPase Obg (341 aa).

The Obg domain occupies 1-159 (MKFVDEALIK…RNLRLELRVL (159 aa)). The disordered stretch occupies residues 128–150 (TRYKSSVNRSPRQTTPGSPGESR). The span at 129–144 (RYKSSVNRSPRQTTPG) shows a compositional bias: polar residues. The 175-residue stretch at 160-334 (ADVGLLGLPN…LCYALMQLID (175 aa)) folds into the OBG-type G domain. Residues 166-173 (GLPNAGKS), 191-195 (FTTLH), 213-216 (DIPG), 283-286 (NKID), and 315-317 (SAI) each bind GTP. Residues Ser-173 and Thr-193 each coordinate Mg(2+).

This sequence belongs to the TRAFAC class OBG-HflX-like GTPase superfamily. OBG GTPase family. In terms of assembly, monomer. Requires Mg(2+) as cofactor.

The protein localises to the cytoplasm. Functionally, an essential GTPase which binds GTP, GDP and possibly (p)ppGpp with moderate affinity, with high nucleotide exchange rates and a fairly low GTP hydrolysis rate. Plays a role in control of the cell cycle, stress response, ribosome biogenesis and in those bacteria that undergo differentiation, in morphogenesis control. The chain is GTPase Obg from Legionella pneumophila subsp. pneumophila (strain Philadelphia 1 / ATCC 33152 / DSM 7513).